Consider the following 218-residue polypeptide: N-(5'-phosphoribosyl)anthranilate isomerase (218 aa).

This sequence belongs to the TrpF family.

It carries out the reaction N-(5-phospho-beta-D-ribosyl)anthranilate = 1-(2-carboxyphenylamino)-1-deoxy-D-ribulose 5-phosphate. Its pathway is amino-acid biosynthesis; L-tryptophan biosynthesis; L-tryptophan from chorismate: step 3/5. In Rhodopseudomonas palustris (strain BisA53), this protein is N-(5'-phosphoribosyl)anthranilate isomerase.